The sequence spans 448 residues: N-succinylarginine dihydrolase (448 aa).

Substrate-binding positions include 19-28, Asn110, and 137-138; these read GGLSYGNVAS and HR. The active site involves Glu174. Arg214 contributes to the substrate binding site. Residue His250 is part of the active site. 2 residues coordinate substrate: Asp252 and Asn365. Cys371 (nucleophile) is an active-site residue.

The protein belongs to the succinylarginine dihydrolase family. Homodimer.

It carries out the reaction N(2)-succinyl-L-arginine + 2 H2O + 2 H(+) = N(2)-succinyl-L-ornithine + 2 NH4(+) + CO2. It participates in amino-acid degradation; L-arginine degradation via AST pathway; L-glutamate and succinate from L-arginine: step 2/5. Functionally, catalyzes the hydrolysis of N(2)-succinylarginine into N(2)-succinylornithine, ammonia and CO(2). The protein is N-succinylarginine dihydrolase of Pseudomonas aeruginosa (strain LESB58).